The sequence spans 380 residues: MSDTLPALRATLTELVAMDTTSFRPNVPLIDYAQARLEAAGFSAERQKFLDDAGVEKVNLVAVKGGSGSGRAALALVGHSDCVPYDAAWTDALRLTEKDGRLYARGACDTKGFIACALHAALNAEQLKAPLMVVLTADEEVGLTGAKKLVEAGLGRARHAIVGEPTRLIPVRANKGYCLAEVEVRGKEGHSAYPDSGASAIFRAGRFLQRLEHLALTVLREDLDEGFQPPFTTVNVGVIQGGKAKNVIPGACRFVVEWRPIPGQPPERVSQLLETIRQELVRDEPAFEAQIRVVRTDRGVNTRADAEVVRFLAEASGNAPETVSFGTEAPQMTELGAEAVVFGPGDIRVAHQTGEYVPVEDLVRCEAVLARAVAHFCGGR.

Residue H79 participates in Zn(2+) binding. The active site involves D81. D109 contributes to the Zn(2+) binding site. The active site involves E139. Positions 140, 164, and 351 each coordinate Zn(2+).

This sequence belongs to the peptidase M20A family. ArgE subfamily. In terms of assembly, homodimer. Zn(2+) is required as a cofactor. Co(2+) serves as cofactor. Requires glutathione as cofactor.

It localises to the cytoplasm. It catalyses the reaction N(2)-acetyl-L-ornithine + H2O = L-ornithine + acetate. It functions in the pathway amino-acid biosynthesis; L-arginine biosynthesis; L-ornithine from N(2)-acetyl-L-ornithine (linear): step 1/1. Catalyzes the hydrolysis of the amide bond of N(2)-acetylated L-amino acids. Cleaves the acetyl group from N-acetyl-L-ornithine to form L-ornithine, an intermediate in L-arginine biosynthesis pathway, and a branchpoint in the synthesis of polyamines. This is Acetylornithine deacetylase from Myxococcus xanthus.